Reading from the N-terminus, the 345-residue chain is Proto-oncogene serine/threonine-protein kinase mos (345 aa).

One can recognise a Protein kinase domain in the interval 63 to 344 (VCLLQRLGAG…LDLRALQAEL (282 aa)). ATP is bound by residues 69-77 (LGAGGFGSV) and Lys90. The active-site Proton acceptor is Asp202.

It belongs to the protein kinase superfamily. Ser/Thr protein kinase family. As to quaternary structure, interacts with MAP2K1/MEK1. Restricted to gonadal tissues.

It localises to the cytoplasm. The catalysed reaction is L-seryl-[protein] + ATP = O-phospho-L-seryl-[protein] + ADP + H(+). It carries out the reaction L-threonyl-[protein] + ATP = O-phospho-L-threonyl-[protein] + ADP + H(+). In terms of biological role, serine/threonine kinase involved in the regulation of MAPK signaling. Is an activator of the ERK1/2 signaling cascade playing an essential role in the stimulation of oocyte maturation. In Sus scrofa (Pig), this protein is Proto-oncogene serine/threonine-protein kinase mos.